The primary structure comprises 280 residues: Acetyl-coenzyme A carboxylase carboxyl transferase subunit beta (280 aa).

The region spanning 28-280 is the CoA carboxyltransferase N-terminal domain; sequence IMTKCPSCRT…TLTKLLAMHQ (253 aa). Residues Cys32, Cys35, Cys51, and Cys54 each coordinate Zn(2+). The C4-type zinc finger occupies 32–54; that stretch reads CPSCRTIMYTKDLKKNLSVCRTC.

This sequence belongs to the AccD/PCCB family. In terms of assembly, acetyl-CoA carboxylase is a heterohexamer composed of biotin carboxyl carrier protein (AccB), biotin carboxylase (AccC) and two subunits each of ACCase subunit alpha (AccA) and ACCase subunit beta (AccD). Requires Zn(2+) as cofactor.

Its subcellular location is the cytoplasm. It carries out the reaction N(6)-carboxybiotinyl-L-lysyl-[protein] + acetyl-CoA = N(6)-biotinyl-L-lysyl-[protein] + malonyl-CoA. Its pathway is lipid metabolism; malonyl-CoA biosynthesis; malonyl-CoA from acetyl-CoA: step 1/1. In terms of biological role, component of the acetyl coenzyme A carboxylase (ACC) complex. Biotin carboxylase (BC) catalyzes the carboxylation of biotin on its carrier protein (BCCP) and then the CO(2) group is transferred by the transcarboxylase to acetyl-CoA to form malonyl-CoA. This is Acetyl-coenzyme A carboxylase carboxyl transferase subunit beta from Shouchella clausii (strain KSM-K16) (Alkalihalobacillus clausii).